Here is a 329-residue protein sequence, read N- to C-terminus: Glycerol-3-phosphate dehydrogenase [NAD(P)+] (329 aa).

Trp15, His35, and Lys107 together coordinate NADPH. The sn-glycerol 3-phosphate site is built by Lys107, Gly135, and Ser137. Position 139 (Ala139) interacts with NADPH. Lys190, Asp243, Ser253, Arg254, and Asn255 together coordinate sn-glycerol 3-phosphate. Lys190 acts as the Proton acceptor in catalysis. Residue Arg254 coordinates NADPH. 2 residues coordinate NADPH: Leu276 and Glu278.

Belongs to the NAD-dependent glycerol-3-phosphate dehydrogenase family.

It localises to the cytoplasm. It catalyses the reaction sn-glycerol 3-phosphate + NAD(+) = dihydroxyacetone phosphate + NADH + H(+). The enzyme catalyses sn-glycerol 3-phosphate + NADP(+) = dihydroxyacetone phosphate + NADPH + H(+). Its pathway is membrane lipid metabolism; glycerophospholipid metabolism. Its function is as follows. Catalyzes the reduction of the glycolytic intermediate dihydroxyacetone phosphate (DHAP) to sn-glycerol 3-phosphate (G3P), the key precursor for phospholipid synthesis. This Rhodopseudomonas palustris (strain BisB5) protein is Glycerol-3-phosphate dehydrogenase [NAD(P)+].